Consider the following 368-residue polypeptide: uncharacterized protein (368 aa).

It belongs to the ornithine cyclodeaminase/mu-crystallin family.

This is an uncharacterized protein from Dictyostelium discoideum (Social amoeba).